Here is a 337-residue protein sequence, read N- to C-terminus: Ferredoxin--NADP reductase (337 aa).

The FAD site is built by Asp35, Gln43, Tyr48, Val88, Phe123, Asp289, and Thr330.

The protein belongs to the ferredoxin--NADP reductase type 2 family. Homodimer. FAD is required as a cofactor.

It carries out the reaction 2 reduced [2Fe-2S]-[ferredoxin] + NADP(+) + H(+) = 2 oxidized [2Fe-2S]-[ferredoxin] + NADPH. The polypeptide is Ferredoxin--NADP reductase (Paramagnetospirillum magneticum (strain ATCC 700264 / AMB-1) (Magnetospirillum magneticum)).